Here is a 478-residue protein sequence, read N- to C-terminus: Septin-4 (478 aa).

Residues 1–115 (MDRSLGWQGN…RSPWGKLDPY (115 aa)) form a disordered region. A compositionally biased stretch (basic and acidic residues) spans 13-26 (PEDRTEAGIKRFLE). The span at 95 to 108 (APAPLSPSARPRSP) shows a compositional bias: low complexity. Residues serine 117 and serine 118 each carry the phosphoserine modification. A Septin-type G domain is found at 141–414 (KGFDFTLMVA…ENYRAQCIQS (274 aa)). The interval 151 to 158 (GESGLGKS) is G1 motif. Residues 151–158 (GESGLGKS) and threonine 185 each bind GTP. Residues 208–211 (DTPG) are G3 motif. The tract at residues 289–292 (AKAD) is G4 motif. Residue 290 to 298 (KADTLTPPE) participates in GTP binding. The residue at position 325 (serine 325) is a Phosphoserine. Residues glycine 348 and arginine 363 each contribute to the GTP site. The disordered stretch occupies residues 428–448 (LTRESGTDFPIPAVPPGTDPE). Serine 432 carries the phosphoserine modification. Phosphothreonine is present on threonine 434. Residues 447–478 (PETEKLIREKDEELRRMQEMLHKIQKQMKENY) are a coiled coil.

This sequence belongs to the TRAFAC class TrmE-Era-EngA-EngB-Septin-like GTPase superfamily. Septin GTPase family. Septins polymerize into heterooligomeric protein complexes that form filaments, and can associate with cellular membranes, actin filaments and microtubules. GTPase activity is required for filament formation. Interacts with SEPTIN8. In a mesenchymal cell line, interacts with SEPTIN9 isoform 2 variants HNA Trp-106 and Phe-111, but not the wild type SEPTIN9. Component of a septin core octameric complex consisting of SEPTIN12, SEPTIN7, SEPTIN6 and SEPTIN2 or SEPTIN4 in the order 12-7-6-2-2-6-7-12 or 12-7-6-4-4-6-7-12. Interacts with SEPTIN14 (via C-terminus). Interacts with DYRK1A. Interacts with SLC6A3/DAT and SNCA/alpha-synuclein. Interacts with STX1A; in the striatum. Interacts with XIAP (via BIR3 domain) following the induction of apoptosis. Interacts with AREL1 (via HECT domain); in the cytoplasm following induction of apoptosis. As to quaternary structure, part of a complex composed of SEPTIN4 isoform ARTS, XIAP and BCL2, within the complex interacts with both BCL2 (via BH3 domain) and XIAP, ARTS acts as a scaffold protein and stabilizes the complex. Interacts with XIAP (via BIR3 domain) following the induction of apoptosis. In terms of processing, phosphorylated by DYRK1A. Ubiquitinated by AREL1. As to expression, widely expressed in adult and fetal tissues with highest expression in adult brain (at protein level), heart, liver and adrenal gland and fetal heart, kidney, liver and lung. Expressed in presynaptic terminals of dopaminergic neurons projecting from the substantia nigra pars compacta to the striatum (at protein level). Expressed in axonal varicosities in dopaminergic nerve terminals (at protein level). Expressed in the putamen and in the adjacent cerebral cortex (at protein level). Expressed in colonic crypts (at protein level). Also expressed in colorectal cancers and malignant melanomas. Expressed in platelets. In terms of tissue distribution, highly expressed in the brain and heart.

The protein localises to the cytoplasm. It localises to the cell projection. The protein resides in the cilium. Its subcellular location is the flagellum. It is found in the cytoplasmic vesicle. The protein localises to the secretory vesicle. It localises to the axon. The protein resides in the dendrite. Its subcellular location is the perikaryon. It is found in the synapse. The protein localises to the mitochondrion. It localises to the nucleus. Functionally, filament-forming cytoskeletal GTPase. Pro-apoptotic protein involved in LGR5-positive intestinal stem cell and Paneth cell expansion in the intestines, via its interaction with XIAP. May also play a role in the regulation of cell fate in the intestine. Positive regulator of apoptosis involved in hematopoietic stem cell homeostasis; via its interaction with XIAP. Negative regulator of repair and hair follicle regeneration in response to injury, due to inhibition of hair follicle stem cell proliferation, potentially via its interaction with XIAP. Plays an important role in male fertility and sperm motility. During spermiogenesis, essential for the establishment of the annulus (a fibrous ring structure connecting the midpiece and the principal piece of the sperm flagellum) which is a requisite for the structural and mechanical integrity of the sperm. Involved in the migration of cortical neurons and the formation of neuron leading processes during embryonic development. Required for dopaminergic metabolism in presynaptic autoreceptors; potentially via activity as a presynaptic scaffold protein. Its function is as follows. Required for the induction of cell death mediated by TGF-beta and possibly by other apoptotic stimuli. Induces apoptosis through binding and inhibition of XIAP resulting in significant reduction in XIAP levels, leading to caspase activation and cell death. Mediates the interaction between BCL2 and XIAP, thereby positively regulating the ubiquitination and degradation of BCL2 and promoting apoptosis. The protein is Septin-4 of Homo sapiens (Human).